The chain runs to 725 residues: Ribosomal RNA large subunit methyltransferase K/L (725 aa).

The THUMP domain maps to 46-157; the sequence is VAYRLCLWSR…RGQATLSLDL (112 aa).

The protein belongs to the methyltransferase superfamily. RlmKL family.

It localises to the cytoplasm. It carries out the reaction guanosine(2445) in 23S rRNA + S-adenosyl-L-methionine = N(2)-methylguanosine(2445) in 23S rRNA + S-adenosyl-L-homocysteine + H(+). The enzyme catalyses guanosine(2069) in 23S rRNA + S-adenosyl-L-methionine = N(2)-methylguanosine(2069) in 23S rRNA + S-adenosyl-L-homocysteine + H(+). Functionally, specifically methylates the guanine in position 2445 (m2G2445) and the guanine in position 2069 (m7G2069) of 23S rRNA. The protein is Ribosomal RNA large subunit methyltransferase K/L of Pseudomonas aeruginosa (strain ATCC 15692 / DSM 22644 / CIP 104116 / JCM 14847 / LMG 12228 / 1C / PRS 101 / PAO1).